The sequence spans 473 residues: Photosystem II CP43 reaction center protein (473 aa).

The propeptide occupies 1–14; sequence MKTLYSLRRFYPVE. Position 15 is an N-acetylthreonine (Thr15). At Thr15 the chain carries Phosphothreonine. The next 5 membrane-spanning stretches (helical) occupy residues 69 to 93, 134 to 155, 178 to 200, 255 to 275, and 291 to 312; these read LFEV…PHLA, LLGP…KDRN, KALY…RKIT, KPFA…LSYS, and WFNN…ASQA. Glu367 serves as a coordination point for [CaMn4O5] cluster. A helical membrane pass occupies residues 447–471; it reads RARAAAAGFEKGIDRDFEPVLSMTP.

The protein belongs to the PsbB/PsbC family. PsbC subfamily. In terms of assembly, PSII is composed of 1 copy each of membrane proteins PsbA, PsbB, PsbC, PsbD, PsbE, PsbF, PsbH, PsbI, PsbJ, PsbK, PsbL, PsbM, PsbT, PsbX, PsbY, PsbZ, Psb30/Ycf12, at least 3 peripheral proteins of the oxygen-evolving complex and a large number of cofactors. It forms dimeric complexes. Requires Binds multiple chlorophylls and provides some of the ligands for the Ca-4Mn-5O cluster of the oxygen-evolving complex. It may also provide a ligand for a Cl- that is required for oxygen evolution. PSII binds additional chlorophylls, carotenoids and specific lipids. as cofactor.

Its subcellular location is the plastid. The protein localises to the chloroplast thylakoid membrane. Functionally, one of the components of the core complex of photosystem II (PSII). It binds chlorophyll and helps catalyze the primary light-induced photochemical processes of PSII. PSII is a light-driven water:plastoquinone oxidoreductase, using light energy to abstract electrons from H(2)O, generating O(2) and a proton gradient subsequently used for ATP formation. The polypeptide is Photosystem II CP43 reaction center protein (Amborella trichopoda).